The sequence spans 1179 residues: DNA-directed RNA polymerase subunit beta' (1179 aa).

Residues cysteine 60, cysteine 62, cysteine 75, and cysteine 78 each coordinate Zn(2+). Mg(2+)-binding residues include aspartate 449, aspartate 451, and aspartate 453. The Zn(2+) site is built by cysteine 796, cysteine 871, cysteine 878, and cysteine 881.

It belongs to the RNA polymerase beta' chain family. As to quaternary structure, the RNAP catalytic core consists of 2 alpha, 1 beta, 1 beta' and 1 omega subunit. When a sigma factor is associated with the core the holoenzyme is formed, which can initiate transcription. Mg(2+) serves as cofactor. Zn(2+) is required as a cofactor.

The enzyme catalyses RNA(n) + a ribonucleoside 5'-triphosphate = RNA(n+1) + diphosphate. Functionally, DNA-dependent RNA polymerase catalyzes the transcription of DNA into RNA using the four ribonucleoside triphosphates as substrates. This chain is DNA-directed RNA polymerase subunit beta', found in Symbiobacterium thermophilum (strain DSM 24528 / JCM 14929 / IAM 14863 / T).